Reading from the N-terminus, the 146-residue chain is Large ribosomal subunit protein uL15 (146 aa).

Over residues methionine 1–arginine 13 the composition is skewed to basic and acidic residues. The interval methionine 1–glycine 52 is disordered. Composition is skewed to gly residues over residues arginine 21 to alanine 31 and serine 42 to glycine 52.

The protein belongs to the universal ribosomal protein uL15 family. In terms of assembly, part of the 50S ribosomal subunit.

Binds to the 23S rRNA. The chain is Large ribosomal subunit protein uL15 from Bacillus cereus (strain B4264).